Consider the following 300-residue polypeptide: Transcription initiation factor IIB (300 aa).

The TFIIB-type zinc finger occupies 3 to 34 (KQRVCPVCGSTEFIYDPERGEIVCARCGYVIE). Residues Cys7, Cys10, Cys26, and Cys29 each coordinate Zn(2+). 2 consecutive repeat copies span residues 114–197 (SELD…ARNL) and 210–291 (DYVN…ELVE).

The protein belongs to the TFIIB family.

Functionally, stabilizes TBP binding to an archaeal box-A promoter. Also responsible for recruiting RNA polymerase II to the pre-initiation complex (DNA-TBP-TFIIB). The polypeptide is Transcription initiation factor IIB (Pyrococcus abyssi (strain GE5 / Orsay)).